An 88-amino-acid chain; its full sequence is Small ribosomal subunit protein uS15c (88 aa).

Belongs to the universal ribosomal protein uS15 family. In terms of assembly, part of the 30S ribosomal subunit.

Its subcellular location is the plastid. It localises to the chloroplast. The chain is Small ribosomal subunit protein uS15c (rps15) from Pinus koraiensis (Korean pine).